Reading from the N-terminus, the 133-residue chain is Fluoride-specific ion channel FluC (133 aa).

4 helical membrane-spanning segments follow: residues 12-32 (LAMT…ASLI), 41-61 (WGTL…LVWL), 76-96 (IVGV…CLVF), and 104-124 (MIGI…FAGA). Na(+) contacts are provided by G81 and T84.

Belongs to the fluoride channel Fluc/FEX (TC 1.A.43) family.

It localises to the cell inner membrane. It catalyses the reaction fluoride(in) = fluoride(out). Na(+) is not transported, but it plays an essential structural role and its presence is essential for fluoride channel function. Functionally, fluoride-specific ion channel. Important for reducing fluoride concentration in the cell, thus reducing its toxicity. This is Fluoride-specific ion channel FluC from Xanthomonas axonopodis pv. citri (strain 306).